A 456-amino-acid polypeptide reads, in one-letter code: Ribonuclease inhibitor (456 aa).

The residue at position 1 (methionine 1) is an N-acetylmethionine. LRR repeat units lie at residues 15–43, 44–71, 72–100, 101–128, 129–157, 158–185, 186–214, 215–242, 243–271, 272–299, 300–328, 329–356, 357–385, 386–413, and 414–442; these read WTEL…CKDI, SSAV…VGLV, LQGL…CGIL, PGML…LKLL, CEGL…CEPL, ASVL…VRIL, CQGL…CKDL, CDVV…IAAL, CPGL…CKDL, CRVL…ARLL, CESL…CPYF, CSVL…VQEL, CKAL…CSSL, ANVL…VLQL, and LESL…EEQL. Serine 86 carries the post-translational modification Phosphoserine.

Forms high-affinity heterodimers with RNASE1, ANG and RNASE2.

It localises to the cytoplasm. The protein resides in the nucleus. Its function is as follows. Ribonuclease inhibitor which inhibits RNASE1, RNASE2 and angiogenin (ANG). May play a role in redox homeostasis. Required to inhibit the cytotoxic tRNA ribonuclease activity of ANG in the cytoplasm in absence of stress. Relocates to the nucleus in response to stress, relieving inhibition of ANG in the cytoplasm, and inhibiting the angiogenic activity of ANG in the nucleus. The sequence is that of Ribonuclease inhibitor (Rnh1) from Mus musculus (Mouse).